Here is a 180-residue protein sequence, read N- to C-terminus: Protein Flattop (180 aa).

The tract at residues Pro111–Ser180 is disordered.

Belongs to the Flattop family.

It localises to the cytoplasm. Its subcellular location is the cytoskeleton. The protein resides in the cilium basal body. It is found in the cell projection. The protein localises to the cilium. It localises to the apical cell membrane. Its subcellular location is the cilium axoneme. Functionally, microtubule inner protein (MIP) part of the dynein-decorated doublet microtubules (DMTs) in cilia axoneme. Acts as a regulator of cilium basal body docking and positioning in mono- and multiciliated cells. Regulates basal body docking and cilia formation in multiciliated lung cells. Regulates kinocilium positioning and stereocilia bundle morphogenesis in the inner ear. The sequence is that of Protein Flattop from Xenopus laevis (African clawed frog).